The sequence spans 368 residues: D-alanine--D-alanine ligase (368 aa).

The 210-residue stretch at 141–350 folds into the ATP-grasp domain; sequence KMIWDYSGLP…YNELIMHLIE (210 aa). 176 to 231 serves as a coordination point for ATP; sequence EKDLEYPLFIKPCRAGSSVGAGMVKNRNELLEQAEESFLWDNKILVEACIEAREVE. Residues Asp-303, Glu-317, and Asn-319 each contribute to the Mg(2+) site.

It belongs to the D-alanine--D-alanine ligase family. Mg(2+) is required as a cofactor. The cofactor is Mn(2+).

Its subcellular location is the cytoplasm. It catalyses the reaction 2 D-alanine + ATP = D-alanyl-D-alanine + ADP + phosphate + H(+). It functions in the pathway cell wall biogenesis; peptidoglycan biosynthesis. Cell wall formation. This Treponema denticola (strain ATCC 35405 / DSM 14222 / CIP 103919 / JCM 8153 / KCTC 15104) protein is D-alanine--D-alanine ligase.